The sequence spans 318 residues: Formimidoylglutamase (318 aa).

Mn(2+)-binding residues include H130, D155, H157, D159, D246, and D248.

It belongs to the arginase family. Mn(2+) serves as cofactor.

It carries out the reaction N-formimidoyl-L-glutamate + H2O = formamide + L-glutamate. Its pathway is amino-acid degradation; L-histidine degradation into L-glutamate; L-glutamate from N-formimidoyl-L-glutamate (hydrolase route): step 1/1. Catalyzes the conversion of N-formimidoyl-L-glutamate to L-glutamate and formamide. The chain is Formimidoylglutamase from Klebsiella pneumoniae subsp. pneumoniae (strain ATCC 700721 / MGH 78578).